Here is a 156-residue protein sequence, read N- to C-terminus: 6,7-dimethyl-8-ribityllumazine synthase (156 aa).

5-amino-6-(D-ribitylamino)uracil is bound by residues Trp22, 56-58 (AYE), and 80-82 (AVI). 85–86 (DT) lines the (2S)-2-hydroxy-3-oxobutyl phosphate pocket. His88 acts as the Proton donor in catalysis. Phe113 provides a ligand contact to 5-amino-6-(D-ribitylamino)uracil. Position 127 (Arg127) interacts with (2S)-2-hydroxy-3-oxobutyl phosphate.

The protein belongs to the DMRL synthase family.

It catalyses the reaction (2S)-2-hydroxy-3-oxobutyl phosphate + 5-amino-6-(D-ribitylamino)uracil = 6,7-dimethyl-8-(1-D-ribityl)lumazine + phosphate + 2 H2O + H(+). It functions in the pathway cofactor biosynthesis; riboflavin biosynthesis; riboflavin from 2-hydroxy-3-oxobutyl phosphate and 5-amino-6-(D-ribitylamino)uracil: step 1/2. Its function is as follows. Catalyzes the formation of 6,7-dimethyl-8-ribityllumazine by condensation of 5-amino-6-(D-ribitylamino)uracil with 3,4-dihydroxy-2-butanone 4-phosphate. This is the penultimate step in the biosynthesis of riboflavin. In Deinococcus deserti (strain DSM 17065 / CIP 109153 / LMG 22923 / VCD115), this protein is 6,7-dimethyl-8-ribityllumazine synthase.